A 126-amino-acid polypeptide reads, in one-letter code: Acidic phospholipase A2 S1E6-b (126 aa).

The N-terminal stretch at 1-3 is a signal peptide; sequence VEG. Disulfide bonds link cysteine 29–cysteine 119, cysteine 31–cysteine 47, cysteine 46–cysteine 98, cysteine 52–cysteine 126, cysteine 53–cysteine 91, cysteine 60–cysteine 84, and cysteine 78–cysteine 89. 3 residues coordinate Ca(2+): tyrosine 30, glycine 32, and glycine 34. Histidine 50 is an active-site residue. Position 51 (aspartate 51) interacts with Ca(2+). The active site involves aspartate 92.

As to quaternary structure, homodimer. It depends on Ca(2+) as a cofactor. Expressed by the venom gland.

The protein resides in the secreted. It catalyses the reaction a 1,2-diacyl-sn-glycero-3-phosphocholine + H2O = a 1-acyl-sn-glycero-3-phosphocholine + a fatty acid + H(+). In terms of biological role, snake venom phospholipase that inhibits ADP-induced platelet aggregation. PLA2 catalyzes the calcium-dependent hydrolysis of the 2-acyl groups in 3-sn-phosphoglycerides. The protein is Acidic phospholipase A2 S1E6-b of Calloselasma rhodostoma (Malayan pit viper).